The sequence spans 270 residues: Probable feruloyl esterase C (270 aa).

The first 22 residues, methionine 1–alanine 22, serve as a signal peptide directing secretion.

This sequence belongs to the faeC family.

The protein localises to the secreted. The catalysed reaction is feruloyl-polysaccharide + H2O = ferulate + polysaccharide.. Involved in degradation of plant cell walls. Hydrolyzes the feruloyl-arabinose ester bond in arabinoxylans, and the feruloyl-galactose ester bond in pectin. Active against paranitrophenyl-acetate, methyl ferulate and wheat arabinoxylan. This chain is Probable feruloyl esterase C (faeC), found in Aspergillus terreus (strain NIH 2624 / FGSC A1156).